The following is a 376-amino-acid chain: Chorismate synthase ARO2 (376 aa).

S2 carries the post-translational modification N-acetylserine. H17 is a catalytic residue. Residues 39-61 are disordered; that stretch reads IQPQLTRRRPGQSKLSTPRDEKD. Active-site residues include H104 and D339.

It belongs to the chorismate synthase family. In terms of assembly, homotetramer.

The enzyme catalyses 5-O-(1-carboxyvinyl)-3-phosphoshikimate = chorismate + phosphate. It catalyses the reaction FMNH2 + NADP(+) = FMN + NADPH + 2 H(+). The protein operates within metabolic intermediate biosynthesis; chorismate biosynthesis; chorismate from D-erythrose 4-phosphate and phosphoenolpyruvate: step 7/7. In terms of biological role, bifunctional chorismate synthase and flavin reductase that catalyzes the conversion of 5-enolpyruvylshikimate 3-phosphate (EPSP) to form chorismate, which is the last common intermediate in the synthesis of the three aromatic amino acids phenylalanine, tyrosine and tryptophan. Also acts as a flavin reductase (FR) able to generate reduced flavin mononucleotide in the presence of NADPH. The polypeptide is Chorismate synthase ARO2 (Saccharomyces cerevisiae (strain ATCC 204508 / S288c) (Baker's yeast)).